Here is a 325-residue protein sequence, read N- to C-terminus: Iodotyrosine dehalogenase 1 homolog (325 aa).

The chain crosses the membrane as a helical span at residues 42–62 (VLNVLFTLGVILFVIYQVASL). Topologically, residues 63 to 325 (LHRMNKRVEK…KPVEHITKLY (263 aa)) are cytoplasmic. FMN-binding positions include 135–139 (RRSCR), 163–164 (SV), 273–275 (VTS), and arginine 315.

It belongs to the nitroreductase family. FMN serves as cofactor. As to expression, expressed in body-wall, anal depressor and vulval muscles.

It is found in the membrane. Its function is as follows. May contribute to coordination of muscle contraction as regulatory subunit of the nonessential sup-9 potassium channel complex. May act downstream of sup-10. This Caenorhabditis elegans protein is Iodotyrosine dehalogenase 1 homolog.